The chain runs to 1088 residues: MGKYNLILSEYLSFIYNSQSAVQIPIYYSSNSELENRCIEFHSKCLENSKNGLSLRKLFVEYNDVIENATLLSILSYSYDKYNAVERKLVKYAKGKPLEADLTVNELDYENNKITSELFPTAEEYTDSLMDPAILTSLSSNLNAVMFWLEKHENDVAEKLKVYKRRLDLFTIVASTINKYGVPRHNAKYRYEYDVMKDKPYYLVTWANSSIEMLMSVFSHDDYLIAKELIVLSYSNRSTLAKLVSSPMSILVALVDINGTFITNEELELEFSNKYLRAIVPDQTFDELNQMLDNMRKAGLVDIPKMIQDWLVDRSIEKFPLMAKIYSWSFHVGFRKQKMLDACAGTLKTEYTENVDDEMYREYTMLIRDEVVKMLEEPVKHDDHLLRDSELAGLLSMSSASNGESRQLKFGRKTIFSTKKNMHVMDDMANERYTPGIIPPVNVDKPIPLGRRDVPGRRTRIIFILPYEYFIAQHAVVEKMLIYAKHTREYAEFYSQSNQLLSYGDVTRFLSNNTMVLYTDVSQWDSSQHNTQPFRKGIIMGLDILANMTNDAKVLQTLNLYKQTQINLMDSYVQIPDGNVIKKIQYGAVASGEKQTKAANSIANLALIKTVLSRISNKHSFATKIIRVDGDDNYAVLQFNTEVTKQMIQDVSNDVRETYARMNAKVKALVSTVGIEIAKRYIAGGKIFFRAGINLLNNEKRGQSTQWDQAAILYSNYIVNRLRGFETDREFILTKIMQMTSVAITGSLRLFPSERVLTTNSTFKVFDSEDFIIEYGTTDDEVYIQRAFMSLSSQKSGIADEIAASSTFKNYVTRLSEQLLFSKNNIVSRGIALTEKAKLNSYAPISLEKRRAQISALLTMLQKPVTFKSSKITINDILRDIKPFFTVSDAHLPIQYQKFMPTLPDNVQYIIQCIGSRTYQIEDDGSKSAISRLISKYSVYKPSIEELYKVISLHENEIQLYLISLGIPKIDADTYVGSKIYSQDKYRILESYVYNLLSINYGCYQLFDFNSPDLEKLIRIPFKGKIPAVTFILHLYAKLEVINYAIKNGSWISLFCNYPKSEMIKLWKKMWNITSLRSPYTNANFFQD.

The 187-residue stretch at 501 to 687 folds into the RdRp catalytic domain; it reads LSYGDVTRFL…AKRYIAGGKI (187 aa).

It belongs to the reoviridae RNA-directed RNA polymerase family. Interacts with VP3 (Potential). Interacts with VP2; this interaction activates VP1. Interacts with NSP5; this interaction is probably necessary for the formation of functional virus factories. Interacts with NSP2; this interaction is weak. Requires Mg(2+) as cofactor.

It localises to the virion. The enzyme catalyses RNA(n) + a ribonucleoside 5'-triphosphate = RNA(n+1) + diphosphate. Functionally, RNA-directed RNA polymerase that is involved in both transcription and genome replication. Together with VP3 capping enzyme, forms an enzyme complex positioned near the channels situated at each of the five-fold vertices of the core. Following infection, the outermost layer of the virus is lost, leaving a double-layered particle (DLP) made up of the core and VP6 shell. VP1 then catalyzes the transcription of fully conservative plus-strand genomic RNAs that are extruded through the DLP's channels into the cytoplasm where they function as mRNAs for translation of viral proteins. One copy of each of the viral (+)RNAs is also recruited during core assembly, together with newly synthesized polymerase complexes and VP2. The polymerase of these novo-formed particles catalyzes the synthesis of complementary minus-strands leading to dsRNA formation. To do so, the polymerase specifically recognizes and binds 4 bases 5'-UGUG-3' in the conserved 3'-sequence of plus-strand RNA templates. VP2 presumably activates the autoinhibited VP1-RNA complex to coordinate packaging and genome replication. Once dsRNA synthesis is complete, the polymerase switches to the transcriptional mode, thus providing secondary transcription. This Rotavirus A (strain RVA/SA11-Both/G3P5B[2]) (RV-A) protein is RNA-directed RNA polymerase.